We begin with the raw amino-acid sequence, 200 residues long: Late embryogenesis abundant protein 19 (200 aa).

Disordered stretches follow at residues 1–158 (MASH…KSTV) and 172–200 (TEDK…ARDH). Composition is skewed to basic and acidic residues over residues 13–23 (GETKAHTEEKA), 30–42 (SKDK…DRAS), 53–81 (QDTK…KDKT), 88–97 (ARDKAAESKD), and 105–114 (EKTEQAKQKA). The stretch at 52–81 (GQDTKEATKEKAQAAKERASETAQAAKDKT) forms a coiled coil. A compositionally biased stretch (low complexity) spans 115 to 130 (AETAGAAKQKTAETAQ). The segment covering 145–156 (SVLQQASEQVKS) has biased composition (polar residues). Residues 172–183 (TEDKAGTDDGAN) show a composition bias toward basic and acidic residues. A compositionally biased stretch (low complexity) spans 186 to 200 (TSATAAATETTARDH).

It belongs to the LEA type 4 family. Expressed in the shoot apex and leaves.

In terms of biological role, involved in response to drought stress. In Oryza sativa subsp. indica (Rice), this protein is Late embryogenesis abundant protein 19.